Consider the following 305-residue polypeptide: UDP-N-acetylenolpyruvoylglucosamine reductase (305 aa).

The 169-residue stretch at 22–190 folds into the FAD-binding PCMH-type domain; the sequence is KVGGAADFFA…LSARFRLQAG (169 aa). Arg169 is a catalytic residue. Ser220 functions as the Proton donor in the catalytic mechanism. Residue Glu290 is part of the active site.

The protein belongs to the MurB family. Requires FAD as cofactor.

Its subcellular location is the cytoplasm. The catalysed reaction is UDP-N-acetyl-alpha-D-muramate + NADP(+) = UDP-N-acetyl-3-O-(1-carboxyvinyl)-alpha-D-glucosamine + NADPH + H(+). It functions in the pathway cell wall biogenesis; peptidoglycan biosynthesis. Functionally, cell wall formation. This chain is UDP-N-acetylenolpyruvoylglucosamine reductase, found in Synechococcus sp. (strain RCC307).